The primary structure comprises 778 residues: Subtilisin-like protease SBT3.6 (778 aa).

An N-terminal signal peptide occupies residues 1–22 (MMNYRTSIYVVLSLVIFLNVQR). The propeptide at 23 to 113 (SFVAESSAKR…VIPDSFYKLA (91 aa)) is activation peptide. The Inhibitor I9 domain maps to 34-113 (VHIVYLGEKQ…VIPDSFYKLA (80 aa)). An N-linked (GlcNAc...) asparagine glycan is attached at N69. Residues 117 to 625 (TWDYLGLSAA…GGLVNPEKSA (509 aa)) enclose the Peptidase S8 domain. D147 (charge relay system) is an active-site residue. N158, N180, N202, and N206 each carry an N-linked (GlcNAc...) asparagine glycan. The active-site Charge relay system is the H222. N237, N399, N414, and N541 each carry an N-linked (GlcNAc...) asparagine glycan. A PA domain is found at 388–483 (SLVYPENPGN…ELGTDILLYT (96 aa)). The Charge relay system role is filled by S556. Residues N648, N724, and N759 are each glycosylated (N-linked (GlcNAc...) asparagine).

The protein belongs to the peptidase S8 family.

It localises to the secreted. The protein is Subtilisin-like protease SBT3.6 of Arabidopsis thaliana (Mouse-ear cress).